The following is a 465-amino-acid chain: MSSELMFNYTFSWPAGPKDVILTGTFDDWRGTLPLVKTAKGNFEITMPVKLXNKDDTFQFKFIVDGVWCVSDSYKKEHVSEGIENNFLQITDLVETQEVXGASRIPEAGGLLCGKPPRSAGPPSTSNRKKNKRNNKKRKSKLKKKSTKNNKKSNESXDDNEEEDXVTGTTTEDVTGTSREETPLAEPTNVSKEAPGNFHILPIDQSADTTQSNGIIGGPGPVLVPNPGEIKEFTEIRDVDARELNERLNKKEEVPEPVAGPIVESSVTEKSPALPQADDPIVETKEMAHNVQELTPQVEAVTPLINELEPLPTPEAQISIPESSKVEPVEGSLQSKLVEKRESTEGVSDGSKKVENKAKKDEEVFTLDPIVNKAPKLPLTDEQTAEGRKSPAVSEEKEKKKKQEKGSKEVKRSETSKEKKPSAKEVKKQTVKAPKKQTASPLSSSTEEPKKKKTGFFGKLKKLFK.

2 disordered regions span residues 107–227 (EAGG…VPNP) and 247–275 (RLNKKEEVPEPVAGPIVESSVTEKSPALP). Positions 127 to 151 (NRKKNKRNNKKRKSKLKKKSTKNNK) are enriched in basic residues. A phosphoserine mark is found at Ser153 and Ser156. Over residues 156 to 165 (SXDDNEEEDX) the composition is skewed to acidic residues. Residues 160–161 (NE) are X-DNA-binding. Positions 166-177 (VTGTTTEDVTGT) are enriched in low complexity. At Thr182 the chain carries Phosphothreonine. Phosphoserine is present on Ser271. Phosphothreonine is present on Thr295. Residues 312–465 (PTPEAQISIP…FFGKLKKLFK (154 aa)) form a disordered region. Residues Ser319 and Ser343 each carry the phosphoserine modification. A compositionally biased stretch (basic and acidic residues) spans 337–363 (LVEKRESTEGVSDGSKKVENKAKKDEE). Thr366 is subject to Phosphothreonine. Basic and acidic residues-rich tracts occupy residues 385–398 (AEGRKSPAVSEEKE) and 404–428 (EKGSKEVKRSETSKEKKPSAKEVKK). Phosphoserine is present on Ser394. The residue at position 440 (Ser440) is a Phosphoserine. A compositionally biased stretch (basic residues) spans 451–465 (KKKTGFFGKLKKLFK).

Belongs to the CRP1/MDG1 family. Post-translationally, cleaved in the vicinity of position 160 to give an X-DNA-binding N-terminal subpeptide and a non-DNA-binding C-terminal subpeptide.

Cruciform DNA-binding protein which exerts an enhancing effect on the cleavage of cruciform DNA (X-DNA) by endonuclease VII from bacteriophage T4. In Saccharomyces cerevisiae (strain FostersB) (Baker's yeast), this protein is Cruciform DNA-recognizing protein 1 (CRP1).